The sequence spans 416 residues: Dihydroorotase (416 aa).

Positions 53 and 55 each coordinate Zn(2+). Residues 55-57 (HLR) and Asn87 contribute to the substrate site. Residues Asp145, His172, His225, and Asp298 each contribute to the Zn(2+) site. Residue Asp298 is part of the active site. A substrate-binding site is contributed by His302.

It belongs to the metallo-dependent hydrolases superfamily. DHOase family. Class I DHOase subfamily. Zn(2+) is required as a cofactor.

It catalyses the reaction (S)-dihydroorotate + H2O = N-carbamoyl-L-aspartate + H(+). Its pathway is pyrimidine metabolism; UMP biosynthesis via de novo pathway; (S)-dihydroorotate from bicarbonate: step 3/3. In terms of biological role, catalyzes the reversible cyclization of carbamoyl aspartate to dihydroorotate. The protein is Dihydroorotase of Deinococcus radiodurans (strain ATCC 13939 / DSM 20539 / JCM 16871 / CCUG 27074 / LMG 4051 / NBRC 15346 / NCIMB 9279 / VKM B-1422 / R1).